The following is a 423-amino-acid chain: F-box protein At1g52495 (423 aa).

The 47-residue stretch at 49–95 (KLKDVHLPLDLIVEILKKLPTKSLMRFRCVSKPWSFIISKRRDFVES) folds into the F-box domain.

The chain is F-box protein At1g52495 from Arabidopsis thaliana (Mouse-ear cress).